A 190-amino-acid chain; its full sequence is Riboflavin transporter FmnP (190 aa).

Topologically, residues 1–5 are extracellular; it reads MKVKK. The chain crosses the membrane as a helical span at residues 6-26; that stretch reads LVVVSMLSSIAFVLMLLNFPF. Over 27 to 39 the chain is Cytoplasmic; the sequence is PGLPDYLKIDFSD. The helical transmembrane segment at 40-60 threads the bilayer; the sequence is VPAIIAILIYGPLAGIAVEAI. Residues 61-76 lie on the Extracellular side of the membrane; that stretch reads KNVLQYIIQGSMAGVP. The chain crosses the membrane as a helical span at residues 77 to 97; the sequence is VGQVANFIAGTLFILPTAFLF. The Cytoplasmic segment spans residues 98–109; it reads KKLNSAKGLAVS. A helical transmembrane segment spans residues 110-130; it reads LLLGTAAMTILMSILNYVLIL. Over 131–154 the chain is Extracellular; the sequence is PAYTWFLHSPALSDSALKTAVVAG. The chain crosses the membrane as a helical span at residues 155 to 175; it reads ILPFNMIKGIVITVVFSLIFI. At 176-190 the chain is on the cytoplasmic side; that stretch reads KLKPWIEQQRSAHIH.

Belongs to the prokaryotic riboflavin transporter (P-RFT) (TC 2.A.87) family. Forms a stable energy-coupling factor (ECF) transporter complex composed of a membrane-embedded substrate-binding protein (S component), 2 ATP-binding proteins (A component) and 2 transmembrane proteins (T component). May be able to interact with more than 1 S component at a time.

The protein localises to the cell membrane. With respect to regulation, inhibited by excess of riboflavin or FMN. Also inhibited by protonophores such as CCCP and FCCP or in the absence of glucose. Mediates uptake of riboflavin and roseoflavin, a toxic riboflavin analog; may also transport FMN. Probably a riboflavin-binding protein that interacts with the energy-coupling factor (ECF) ABC-transporter complex. Unlike classic ABC transporters this ECF transporter provides the energy necessary to transport a number of different substrates. The substrates themselves are bound by transmembrane, not extracytoplasmic soluble proteins. This is Riboflavin transporter FmnP (fmnP) from Bacillus subtilis (strain 168).